A 188-amino-acid polypeptide reads, in one-letter code: MKISANSIRTGNILVYNNDLWVVSKTPEHTQPGKGGAYVQVEMKNLKTGTKRNERFSSADYLEKAELEQKDYQFLYFEGDDLVLMDTKHFDQINISKEMLEEKLSFLTENMIVKIEFYNDKPLNIELPPTVILEISETDPVIKGATATASYKPAILENGIKVKVPQYLEIGEKIVVKTDDMTYVERAK.

This sequence belongs to the elongation factor P family.

It localises to the cytoplasm. Its pathway is protein biosynthesis; polypeptide chain elongation. Its function is as follows. Involved in peptide bond synthesis. Stimulates efficient translation and peptide-bond synthesis on native or reconstituted 70S ribosomes in vitro. Probably functions indirectly by altering the affinity of the ribosome for aminoacyl-tRNA, thus increasing their reactivity as acceptors for peptidyl transferase. The protein is Elongation factor P of Rickettsia rickettsii (strain Iowa).